The chain runs to 420 residues: Serine hydroxymethyltransferase (420 aa).

Residues Leu-121 and 125–127 each bind (6S)-5,6,7,8-tetrahydrofolate; that span reads GHL. Residue Lys-230 is modified to N6-(pyridoxal phosphate)lysine. Residue 354–356 coordinates (6S)-5,6,7,8-tetrahydrofolate; sequence SPF.

It belongs to the SHMT family. In terms of assembly, homodimer. Pyridoxal 5'-phosphate is required as a cofactor.

It is found in the cytoplasm. The enzyme catalyses (6R)-5,10-methylene-5,6,7,8-tetrahydrofolate + glycine + H2O = (6S)-5,6,7,8-tetrahydrofolate + L-serine. It functions in the pathway one-carbon metabolism; tetrahydrofolate interconversion. The protein operates within amino-acid biosynthesis; glycine biosynthesis; glycine from L-serine: step 1/1. Its function is as follows. Catalyzes the reversible interconversion of serine and glycine with tetrahydrofolate (THF) serving as the one-carbon carrier. This reaction serves as the major source of one-carbon groups required for the biosynthesis of purines, thymidylate, methionine, and other important biomolecules. Also exhibits THF-independent aldolase activity toward beta-hydroxyamino acids, producing glycine and aldehydes, via a retro-aldol mechanism. This Rickettsia africae (strain ESF-5) protein is Serine hydroxymethyltransferase.